A 751-amino-acid chain; its full sequence is ATP-dependent DNA helicase Hel308 (751 aa).

ATP is bound by residues Gln20 and 39–46; that span reads IPTASGKT. In terms of domain architecture, Helicase ATP-binding spans 26–196; that stretch reads EGLLDKSKNF…WLNAKLVTDE (171 aa). A DEAH box motif is present at residues 143–146; the sequence is DEIH. A Helicase C-terminal domain is found at 235–435; that stretch reads NLTDLIVDSV…VLRVHILGLI (201 aa).

This sequence belongs to the helicase family. Hel308 subfamily. As to quaternary structure, monomer.

The catalysed reaction is Couples ATP hydrolysis with the unwinding of duplex DNA by translocating in the 3'-5' direction.. It catalyses the reaction ATP + H2O = ADP + phosphate + H(+). In terms of biological role, DNA-dependent ATPase and 3'-5' DNA helicase that may be involved in repair of stalled replication forks. In Methanococcus vannielii (strain ATCC 35089 / DSM 1224 / JCM 13029 / OCM 148 / SB), this protein is ATP-dependent DNA helicase Hel308.